The sequence spans 207 residues: 23 kDa calcium-binding protein (207 aa).

At methionine 1 the chain carries Blocked amino end (Met). EF-hand domains are found at residues 17–52 (AKLD…TFEN), 60–95 (VTAD…CLKK), 119–154 (MKLD…TYKQ), and 161–196 (PTEA…GLKK). Residues aspartate 30, asparagine 32, asparagine 34, threonine 36, glutamate 41, aspartate 73, aspartate 75, asparagine 77, glutamate 84, aspartate 132, aspartate 134, serine 136, glutamine 138, glutamate 143, aspartate 174, aspartate 176, asparagine 178, threonine 180, and glutamate 185 each contribute to the Ca(2+) site.

Functionally, expected to play a crucial role in calcium-dependent regulation of ciliary movement. This chain is 23 kDa calcium-binding protein, found in Tetrahymena thermophila.